Reading from the N-terminus, the 175-residue chain is Large ribosomal subunit protein uL16 (175 aa).

The protein belongs to the universal ribosomal protein uL16 family.

The sequence is that of Large ribosomal subunit protein uL16 from Metallosphaera sedula (strain ATCC 51363 / DSM 5348 / JCM 9185 / NBRC 15509 / TH2).